The primary structure comprises 451 residues: Probable beta-1,4-xylosyltransferase GT43E (451 aa).

Topologically, residues 1-88 (MVSSRRNTGG…SKSRGLSCKR (88 aa)) are cytoplasmic. Residues 89–109 (LAFHLFVCFMVGIFIGFMPFF) form a helical; Signal-anchor for type II membrane protein membrane-spanning segment. Residues 110-451 (SVDVSQKIVS…KNLDAVIPVT (342 aa)) lie on the Lumenal side of the membrane. Residues asparagine 260 and asparagine 366 are each glycosylated (N-linked (GlcNAc...) asparagine).

Belongs to the glycosyltransferase 43 family.

It is found in the golgi apparatus membrane. Functionally, probable beta-1,4-xylosyltransferase involved in xylan biosynthesis in cell walls. This Oryza sativa subsp. japonica (Rice) protein is Probable beta-1,4-xylosyltransferase GT43E.